Reading from the N-terminus, the 208-residue chain is MARYNESVCRLCRRENLKMYLKGDRCYTDKCAIERRPYPPGQHGQGRVKFSEYGVQLREKQKVKRMYGLLEAGFRHAYQNAAAAKGKTGENLLQTLELRLDNVVFRLGFADTRNEARQLVRHGHFKVNGRKVNIPSYLCRAGDKVELRDRSRKVVRISEALEAVDRRGVPGWLELDKGGFKGTVRTQPSREDITMPIQEQLIVELYSK.

Positions 98-161 (LRLDNVVFRL…RKVVRISEAL (64 aa)) constitute an S4 RNA-binding domain.

It belongs to the universal ribosomal protein uS4 family. In terms of assembly, part of the 30S ribosomal subunit. Contacts protein S5. The interaction surface between S4 and S5 is involved in control of translational fidelity.

Functionally, one of the primary rRNA binding proteins, it binds directly to 16S rRNA where it nucleates assembly of the body of the 30S subunit. With S5 and S12 plays an important role in translational accuracy. The protein is Small ribosomal subunit protein uS4 of Anaeromyxobacter sp. (strain Fw109-5).